We begin with the raw amino-acid sequence, 439 residues long: Mitochondrial distribution and morphology protein 12 (439 aa).

Positions 1–439 (MSIDVNWRFA…VYPSFWTFLI (439 aa)) constitute an SMP-LTD domain. 3 disordered regions span residues 70 to 103 (YEED…LNEP), 185 to 274 (GWSD…PPRM), and 354 to 386 (PEQQ…RHGG). Positions 78–91 (TSDASEERGEEHSS) are enriched in basic and acidic residues. The segment covering 215-245 (DTSNSTSRPSTANTLPSHPSGSSKNSGQAAT) has biased composition (polar residues). Basic and acidic residues-rich tracts occupy residues 247–261 (RNDH…HLED) and 362–371 (SAGDDHRPQS).

Belongs to the MDM12 family. As to quaternary structure, component of the ER-mitochondria encounter structure (ERMES) or MDM complex, composed of mmm1, mdm10, mdm12 and mdm34. A mmm1 homodimer associates with one molecule of mdm12 on each side in a pairwise head-to-tail manner, and the SMP-LTD domains of mmm1 and mdm12 generate a continuous hydrophobic tunnel for phospholipid trafficking.

Its subcellular location is the mitochondrion outer membrane. The protein resides in the endoplasmic reticulum membrane. Component of the ERMES/MDM complex, which serves as a molecular tether to connect the endoplasmic reticulum (ER) and mitochondria. Components of this complex are involved in the control of mitochondrial shape and protein biogenesis, and function in nonvesicular lipid trafficking between the ER and mitochondria. Mdm12 is required for the interaction of the ER-resident membrane protein mmm1 and the outer mitochondrial membrane-resident beta-barrel protein mdm10. The mdm12-mmm1 subcomplex functions in the major beta-barrel assembly pathway that is responsible for biogenesis of all mitochondrial outer membrane beta-barrel proteins, and acts in a late step after the SAM complex. The mdm10-mdm12-mmm1 subcomplex further acts in the TOM40-specific pathway after the action of the mdm12-mmm1 complex. Essential for establishing and maintaining the structure of mitochondria and maintenance of mtDNA nucleoids. In Aspergillus fumigatus (strain CBS 144.89 / FGSC A1163 / CEA10) (Neosartorya fumigata), this protein is Mitochondrial distribution and morphology protein 12.